Consider the following 158-residue polypeptide: MIGRMVGLEPSSRSGVLEECRECRAIVMKGDGVQTPLHKGDSILGGEGACLMRYAAWTLISAVDVVYCSLETRESVSLTFNPDGQVIVVPFMFKGYNIAALPTTKFGDLKKDTKQIENVVSFLRSDICYAVWEFLVSSVQYKDDDRFERLFDERMRGI.

This sequence belongs to the UPF0329 family.

This Encephalitozoon cuniculi (strain GB-M1) (Microsporidian parasite) protein is UPF0329 protein ECU06_0050.